Here is a 346-residue protein sequence, read N- to C-terminus: Ribonucleoside-diphosphate reductase subunit beta (346 aa).

Residues Glu-89, Glu-120, and His-123 each contribute to the Fe cation site. Residue Tyr-129 is part of the active site. Residues Glu-193, Glu-227, and His-230 each coordinate Fe cation.

This sequence belongs to the ribonucleoside diphosphate reductase small chain family. In terms of assembly, tetramer of two alpha and two beta subunits. Fe cation is required as a cofactor.

The enzyme catalyses a 2'-deoxyribonucleoside 5'-diphosphate + [thioredoxin]-disulfide + H2O = a ribonucleoside 5'-diphosphate + [thioredoxin]-dithiol. Its function is as follows. Provides the precursors necessary for DNA synthesis. Catalyzes the biosynthesis of deoxyribonucleotides from the corresponding ribonucleotides. The chain is Ribonucleoside-diphosphate reductase subunit beta (nrdB) from Chlamydia pneumoniae (Chlamydophila pneumoniae).